Reading from the N-terminus, the 357-residue chain is UDP-3-O-acylglucosamine N-acyltransferase (357 aa).

H258 functions as the Proton acceptor in the catalytic mechanism.

The protein belongs to the transferase hexapeptide repeat family. LpxD subfamily. Homotrimer.

The catalysed reaction is a UDP-3-O-[(3R)-3-hydroxyacyl]-alpha-D-glucosamine + a (3R)-hydroxyacyl-[ACP] = a UDP-2-N,3-O-bis[(3R)-3-hydroxyacyl]-alpha-D-glucosamine + holo-[ACP] + H(+). Its pathway is bacterial outer membrane biogenesis; LPS lipid A biosynthesis. Its function is as follows. Catalyzes the N-acylation of UDP-3-O-acylglucosamine using 3-hydroxyacyl-ACP as the acyl donor. Is involved in the biosynthesis of lipid A, a phosphorylated glycolipid that anchors the lipopolysaccharide to the outer membrane of the cell. This Azorhizobium caulinodans (strain ATCC 43989 / DSM 5975 / JCM 20966 / LMG 6465 / NBRC 14845 / NCIMB 13405 / ORS 571) protein is UDP-3-O-acylglucosamine N-acyltransferase.